The sequence spans 605 residues: Pescadillo homolog (605 aa).

Residues 346–440 form the BRCT domain; that stretch reads PVATLFSEFV…ELVPANLYLP (95 aa). Residues 449–553 are disordered; the sequence is SPWGDSTGYD…RKATEEEEEK (105 aa). Over residues 461–508 the composition is skewed to acidic residues; that stretch reads AENDEDVEGSDAEEIDESADEDAESEEVEEDDTAAVALNEDDEDDEDE. Positions 526–537 are enriched in basic and acidic residues; sequence EAKDVIDSESSD. Positions 533 to 605 form a coiled coil; the sequence is SESSDKKKKK…KAKLAKLDKK (73 aa).

It belongs to the pescadillo family. In terms of assembly, component of the NOP7 complex, composed of ERB1, NOP7 and YTM1. The complex is held together by ERB1, which interacts with NOP7 via its N-terminal domain and with YTM1 via a high-affinity interaction between the seven-bladed beta-propeller domains of the 2 proteins. The NOP7 complex associates with the 66S pre-ribosome.

It is found in the nucleus. Its subcellular location is the nucleolus. The protein resides in the nucleoplasm. Its function is as follows. Component of the NOP7 complex, which is required for maturation of the 25S and 5.8S ribosomal RNAs and formation of the 60S ribosome. The protein is Pescadillo homolog of Kluyveromyces lactis (strain ATCC 8585 / CBS 2359 / DSM 70799 / NBRC 1267 / NRRL Y-1140 / WM37) (Yeast).